Here is a 315-residue protein sequence, read N- to C-terminus: Spermidine synthase 1 (315 aa).

The PABS domain maps to 25–262 (PGWFSEISPL…GMIGFMLCST (238 aa)). An S-adenosyl 3-(methylsulfanyl)propylamine-binding site is contributed by glutamine 56. A putrescine-binding site is contributed by tyrosine 86. S-adenosyl 3-(methylsulfanyl)propylamine contacts are provided by residues glutamine 87, aspartate 111, glutamate 131, 162–163 (DG), and aspartate 181. Catalysis depends on aspartate 181, which acts as the Proton acceptor. Putrescine contacts are provided by residues 181–184 (DSSD) and tyrosine 250.

It belongs to the spermidine/spermine synthase family.

The enzyme catalyses S-adenosyl 3-(methylsulfanyl)propylamine + putrescine = S-methyl-5'-thioadenosine + spermidine + H(+). It functions in the pathway amine and polyamine biosynthesis; spermidine biosynthesis; spermidine from putrescine: step 1/1. This is Spermidine synthase 1 from Hyoscyamus niger (Black henbane).